The following is a 437-amino-acid chain: Endoplasmic reticulum protein SC65 (437 aa).

An N-terminal signal peptide occupies residues 1–18 (MARVAWGLLWLLLGSAGA). Asn361 carries N-linked (GlcNAc...) asparagine glycosylation. Composition is skewed to acidic residues over residues 381-413 (DEME…EEGM) and 428-437 (AEAEPEPELA). A disordered region spans residues 381–437 (DEMELEETEPPLEPEDALSDAEFEGEGDYEEGMYADWWQEPDAKGDEAEAEPEPELA).

The protein belongs to the leprecan family. As to quaternary structure, interacts with PLOD1, P3H3 and PPIB. Identified in a complex with PLOD1 and P3H3. Detected in fibroblasts (at protein level). Detected in spleen, prostate, testis, ovary, colon, pancreas, kidney, placenta and heart.

The protein resides in the endoplasmic reticulum. Functionally, part of a complex composed of PLOD1, P3H3 and P3H4 that catalyzes hydroxylation of lysine residues in collagen alpha chains and is required for normal assembly and cross-linking of collagen fibrils. Required for normal bone density and normal skin stability via its role in hydroxylation of lysine residues in collagen alpha chains and in collagen fibril assembly. The chain is Endoplasmic reticulum protein SC65 from Homo sapiens (Human).